A 359-amino-acid polypeptide reads, in one-letter code: Guanine nucleotide-binding protein G(o) subunit alpha (359 aa).

Residues Met1–Arg26 are disordered. The N-myristoyl glycine moiety is linked to residue Gly2. Cys4 is lipidated: S-palmitoyl cysteine. One can recognise a G-alpha domain in the interval Asn34–Leu359. The segment at Lys37–Thr50 is G1 motif. GTP contacts are provided by residues Gly42–Ser49, Leu178–Thr184, Asp203–Gln207, Asn272–Asp275, and Ala331. Mg(2+) is bound by residues Ser49 and Thr184. A G2 motif region spans residues Asp176–Thr184. The G3 motif stretch occupies residues Tyr199–Arg208. Residues Ile268 to Asp275 form a G4 motif region. Residues Thr329 to Thr334 are G5 motif.

This sequence belongs to the G-alpha family. G(i/o/t/z) subfamily. As to quaternary structure, g proteins are composed of 3 units; alpha, beta and gamma. The alpha chain contains the guanine nucleotide binding site.

Guanine nucleotide-binding proteins (G proteins) are involved as modulators or transducers in various transmembrane signaling systems. The G(o) protein function is not clear. The protein is Guanine nucleotide-binding protein G(o) subunit alpha of Geodia cydonium (Sponge).